Consider the following 1915-residue polypeptide: Cysteine repeat modular protein 2 (1915 aa).

The signal sequence occupies residues methionine 1–alanine 23. 5 FU repeats span residues leucine 53–valine 98, serine 104–glutamine 151, glutamine 161–lysine 208, asparagine 210–valine 263, and threonine 267–glutamine 315. The N-linked (GlcNAc...) asparagine glycan is linked to asparagine 138. Residues asparagine 274, asparagine 279, and asparagine 316 are each glycosylated (N-linked (GlcNAc...) asparagine). FU repeat units lie at residues serine 317–threonine 362, glutamine 373–tyrosine 422, threonine 427–glutamine 492, asparagine 496–asparagine 546, and threonine 554–methionine 602. Asparagine 409 carries an N-linked (GlcNAc...) asparagine glycan. Asparagine 496, asparagine 572, asparagine 603, and asparagine 621 each carry an N-linked (GlcNAc...) asparagine glycan. FU repeat units lie at residues threonine 606–asparagine 639, tyrosine 640–valine 686, and glutamine 690–leucine 739. N-linked (GlcNAc...) asparagine glycosylation is present at asparagine 742. FU repeat units lie at residues aspartate 760–tyrosine 814 and asparagine 818–glutamine 865. Residues asparagine 909, asparagine 930, asparagine 1051, asparagine 1085, and asparagine 1193 are each glycosylated (N-linked (GlcNAc...) asparagine). The region spanning valine 1184–glutamate 1224 is the EGF-like domain. 3 disulfides stabilise this stretch: cysteine 1188-cysteine 1200, cysteine 1194-cysteine 1212, and cysteine 1214-cysteine 1223. N-linked (GlcNAc...) asparagine glycans are attached at residues asparagine 1250, asparagine 1297, asparagine 1519, asparagine 1546, asparagine 1554, asparagine 1580, and asparagine 1596. 5 helical membrane passes run leucine 1599–isoleucine 1619, tyrosine 1662–leucine 1682, serine 1704–phenylalanine 1724, glycine 1763–phenylalanine 1783, and phenylalanine 1796–isoleucine 1816. Asparagine 1867 is a glycosylation site (N-linked (GlcNAc...) asparagine).

Its subcellular location is the membrane. Functionally, required for mucocyst secretion. The protein is Cysteine repeat modular protein 2 of Tetrahymena thermophila (strain SB210).